Consider the following 334-residue polypeptide: Geranylgeranyl pyrophosphate synthase ltmG (334 aa).

Positions 53, 56, and 85 each coordinate isopentenyl diphosphate. Residues aspartate 92 and aspartate 96 each coordinate Mg(2+). Arginine 101 provides a ligand contact to dimethylallyl diphosphate. Residue arginine 102 coordinates isopentenyl diphosphate. Dimethylallyl diphosphate-binding residues include lysine 179, threonine 180, and glutamine 213. Residue aspartate 216 participates in Mg(2+) binding. Residues asparagine 220, lysine 230, and lysine 240 each coordinate dimethylallyl diphosphate.

It belongs to the FPP/GGPP synthase family. Requires Mg(2+) as cofactor.

The catalysed reaction is isopentenyl diphosphate + dimethylallyl diphosphate = (2E)-geranyl diphosphate + diphosphate. It catalyses the reaction isopentenyl diphosphate + (2E)-geranyl diphosphate = (2E,6E)-farnesyl diphosphate + diphosphate. The enzyme catalyses isopentenyl diphosphate + (2E,6E)-farnesyl diphosphate = (2E,6E,10E)-geranylgeranyl diphosphate + diphosphate. It functions in the pathway secondary metabolite biosynthesis. Functionally, geranylgeranyl pyrophosphate synthase; part of the gene cluster that mediates the biosynthesis of lolitrems, indole-diterpene mycotoxins that are potent tremorgens in mammals, and are synthesized by clavicipitaceous fungal endophytes in association with their grass hosts. The geranylgeranyl diphosphate (GGPP) synthase ltmG is proposed to catalyze the first step in lolitrem biosynthesis. LtmG catalyzes a series of iterative condensations of isopentenyl diphosphate (IPP) with dimethylallyl diphosphate (DMAPP), geranyl diphosphate (GPP), and farnesyl diphosphate (FPP), to form GGPP. GGPP then condenses with indole-3-glycerol phosphate to form 3-geranylgeranylindole, an acyclic intermediate, to be incorporated into paxilline. Either ltmG or ltmC could be responsible for this step, as both are putative prenyl transferases. The FAD-dependent monooxygenase ltmM then catalyzes the epoxidation of the two terminal alkenes of the geranylgeranyl moiety, which is subsequently cyclized by ltmB, to paspaline. The cytochrome P450 monooxygenases ltmQ and ltmP can sequentially oxidize paspaline to terpendole E and terpendole F. Alternatively, ltmP converts paspaline to an intermediate which is oxidized by ltmQ to terpendole F. LtmF, ltmK, ltmE and ltmJ appear to be unique to the epichloe endophytes. The prenyltransferase ltmF is involved in the 27-hydroxyl-O-prenylation. The cytochrome P450 monooxygenase ltmK is required for the oxidative acetal ring formation. The multi-functional prenyltransferase ltmE is required for C20- and C21-prenylations of the indole ring of paspalanes and acts together with the cytochrome P450 monooxygenase ltmJ to yield lolitremanes by multiple oxidations and ring closures. The stereoisomer pairs of lolitriol and lolitrem N or lolitrem B and lolitrem F may be attributed to variations in the way in which ring closure can occur under the action of ltmJ. While the major product of this pathway is lolitrem B, the prenyl transferases and cytochrome P450 monooxygenases identified in this pathway have a remarkable versatility in their regio- and stereo-specificities to generate a diverse range of metabolites that are products of a metabolic grid rather than a linear pathway. This chain is Geranylgeranyl pyrophosphate synthase ltmG, found in Epichloe festucae (strain Fl1).